The following is a 326-amino-acid chain: DnaJ homolog subfamily B member 6 (326 aa).

The region spanning 2–69 is the J domain; it reads VDYYEVLGVQ…KKRDIYDKYG (68 aa). An interaction with HSP70 region spans residues 2–146; that stretch reads VDYYEVLGVQ…TGSFFSAFSG (145 aa). The segment at 119–242 is interaction with KRT18; that stretch reads FEDFFGNRRG…ADDDALAEER (124 aa). Arginine 135 carries the omega-N-methylarginine modification. A disordered region spans residues 249-326; sequence ALPAQPAGLR…KKKKSTKGNH (78 aa). Serine 277 carries the post-translational modification Phosphoserine.

Homooligomer. Interacts with BAG3, HSPB8 and STUB1. Interacts with ALKBH1. Interacts with HSP70, KRT18 and PTTG. As to quaternary structure, interacts with histone deacetylases HDAC4, HDAC6, and SIRT2, HDAC activity is required for antiaggregation. In terms of tissue distribution, widely expressed. Highest levels in testis and brain, and lower levels in heart, spleen, intestine, ovary, placenta, lung, kidney, pancreas, thymus, prostate, skeletal muscle, liver and leukocytes. In testis, expressed in germ cells in the earlier stages of differentiation pathway as well as in spermatids. In brain, expressed at a higher level in hippocampus and thalamus and a lower level in amygdala, substantia nigra, corpus callosum and caudate nucleus.

The protein localises to the cytoplasm. The protein resides in the perinuclear region. It localises to the nucleus. It is found in the myofibril. Its subcellular location is the sarcomere. The protein localises to the z line. In terms of biological role, has a stimulatory effect on the ATPase activity of HSP70 in a dose-dependent and time-dependent manner and hence acts as a co-chaperone of HSP70. Plays an indispensable role in the organization of KRT8/KRT18 filaments. Acts as an endogenous molecular chaperone for neuronal proteins including huntingtin. Suppresses aggregation and toxicity of polyglutamine-containing, aggregation-prone proteins. Also reduces cellular toxicity and caspase-3 activity. Its function is as follows. Isoform B but not isoform A inhibits huntingtin aggregation. This chain is DnaJ homolog subfamily B member 6 (DNAJB6), found in Homo sapiens (Human).